The chain runs to 529 residues: Bifunctional purine biosynthesis protein PurH (529 aa).

The region spanning 1-148 (MQQRRPVRRA…KNHKDVAIVV (148 aa)) is the MGS-like domain.

This sequence belongs to the PurH family.

The catalysed reaction is (6R)-10-formyltetrahydrofolate + 5-amino-1-(5-phospho-beta-D-ribosyl)imidazole-4-carboxamide = 5-formamido-1-(5-phospho-D-ribosyl)imidazole-4-carboxamide + (6S)-5,6,7,8-tetrahydrofolate. It carries out the reaction IMP + H2O = 5-formamido-1-(5-phospho-D-ribosyl)imidazole-4-carboxamide. It participates in purine metabolism; IMP biosynthesis via de novo pathway; 5-formamido-1-(5-phospho-D-ribosyl)imidazole-4-carboxamide from 5-amino-1-(5-phospho-D-ribosyl)imidazole-4-carboxamide (10-formyl THF route): step 1/1. It functions in the pathway purine metabolism; IMP biosynthesis via de novo pathway; IMP from 5-formamido-1-(5-phospho-D-ribosyl)imidazole-4-carboxamide: step 1/1. This chain is Bifunctional purine biosynthesis protein PurH, found in Salmonella paratyphi B (strain ATCC BAA-1250 / SPB7).